The chain runs to 206 residues: Large ribosomal subunit protein uL4 (206 aa).

The interval 47-77 (GTHDTKTRGEVSGGGRKPWRQKGTGRARHGS) is disordered. Residues 63–77 (KPWRQKGTGRARHGS) are compositionally biased toward basic residues.

It belongs to the universal ribosomal protein uL4 family. Part of the 50S ribosomal subunit.

Functionally, one of the primary rRNA binding proteins, this protein initially binds near the 5'-end of the 23S rRNA. It is important during the early stages of 50S assembly. It makes multiple contacts with different domains of the 23S rRNA in the assembled 50S subunit and ribosome. In terms of biological role, forms part of the polypeptide exit tunnel. The protein is Large ribosomal subunit protein uL4 of Carboxydothermus hydrogenoformans (strain ATCC BAA-161 / DSM 6008 / Z-2901).